We begin with the raw amino-acid sequence, 135 residues long: Large ribosomal subunit protein bL19 (135 aa).

The protein belongs to the bacterial ribosomal protein bL19 family.

In terms of biological role, this protein is located at the 30S-50S ribosomal subunit interface and may play a role in the structure and function of the aminoacyl-tRNA binding site. This is Large ribosomal subunit protein bL19 from Xanthomonas oryzae pv. oryzae (strain KACC10331 / KXO85).